The primary structure comprises 97 residues: Small cell adhesion glycoprotein (97 aa).

Topologically, residues 1-36 (MTSLLTTPSPREELMTTPILQPTEALSPEDGASTAL) are extracellular. O-linked (GalNAc...) threonine glycosylation occurs at Thr2. Ser3 is a glycosylation site (O-linked (GalNAc...) serine). Thr6 and Thr7 each carry an O-linked (GalNAc...) threonine glycan. O-linked (GalNAc...) serine glycosylation occurs at Ser9. Thr16, Thr17, and Thr23 each carry an O-linked (GalNAc...) threonine glycan. Residues 37-57 (IAVVITVVFLTLLSVVILIFF) form a helical; Signal-anchor for type III membrane protein membrane-spanning segment. The Cytoplasmic segment spans residues 58 to 97 (YLYKNKGSYVTYEPTEGEPSAIVQMESDLAKGSEKEEYFI).

The protein belongs to the SMAGP family. O-glycosylated. The O-glycan is modified with sialic acid residues. In terms of tissue distribution, detected in breast, endometrium, colon and biliary tract. Detected in polarized epithelial structures characterized by cell-cell adhesion (at protein level).

The protein resides in the cell membrane. It localises to the cytoplasmic vesicle membrane. May play a role in epithelial cell-cell contacts. May play a role in tumor invasiveness and metastasis formation. The chain is Small cell adhesion glycoprotein (SMAGP) from Homo sapiens (Human).